The primary structure comprises 166 residues: Putative transmembrane protein encoded by LINC00477 (166 aa).

Asn-7 carries an N-linked (GlcNAc...) asparagine glycan. Helical transmembrane passes span 15–35 (VSSFQGSPATPLSFLFFFFLC), 41–61 (MTGCFTFFLDFIFFFAGVLGP), and 63–83 (PMGMYSGASTLTGFFLLRFLG). The tract at residues 127–166 (LPVPHPPSPLSKCPQHPRPRRTKGPGLRKLWGPGPPFFPS) is disordered.

It localises to the membrane. The protein is Putative transmembrane protein encoded by LINC00477 (LINC00477) of Homo sapiens (Human).